The primary structure comprises 470 residues: E3 ubiquitin-protein ligase TRAIP (470 aa).

An RING-type; atypical zinc finger spans residues 7–50 (CTICSDFFDHSRDVAAIHCGHTFHLQCLIQWFETAPSRTCPQCR). The stretch at 76–277 (AEFLKNELDS…RKKLMILQGT (202 aa)) forms a coiled coil. The tract at residues 211-470 (LKEARKATGE…QPKLDTFLCQ (260 aa)) is interaction with CYLD. Residues 461–470 (QPKLDTFLCQ) carry the PIP-box motif.

Belongs to the TRAIP family. In terms of assembly, interacts (via PIP-box) with PCNA. Binds TRAF1, TRAF2, TRAF3, TRAF5 and TRAF6 is part of the receptor-TRAF signaling complex. May interact with CYLD; the C-terminus interacts with CYLD, however the interaction was not detected with the full-length protein. Interacts with POLK and POLN. Interacts with UIMC1. In terms of processing, autoubiquitinated. Sumoylated; sumoylation is required for nuclear localization. Sumoylation increases protein stability, possibly by preventing ubiquitination. Detected in testis and thymus, and at lower levels in spleen.

It localises to the nucleus. It is found in the nucleoplasm. The protein resides in the nucleolus. The protein localises to the chromosome. Its subcellular location is the cytoplasm. It localises to the perinuclear region. It carries out the reaction S-ubiquitinyl-[E2 ubiquitin-conjugating enzyme]-L-cysteine + [acceptor protein]-L-lysine = [E2 ubiquitin-conjugating enzyme]-L-cysteine + N(6)-ubiquitinyl-[acceptor protein]-L-lysine.. Its pathway is protein modification; protein ubiquitination. E3 ubiquitin ligase required to protect genome stability in response to replication stress. Acts as a key regulator of interstrand cross-link repair, which takes place when both strands of duplex DNA are covalently tethered together, thereby blocking replication and transcription. During mitosis, controls the choice between the two pathways of replication-coupled interstrand-cross-link repair by mediating ubiquitination of MCM7 subunit of the CMG helicase complex. Short ubiquitin chains on MCM7 promote recruitment of DNA glycosylase NEIL3. If the interstrand cross-link cannot be cleaved by NEIL3, the ubiquitin chains continue to grow on MCM7, promoting the unloading of the CMG helicase complex by the VCP/p97 ATPase, enabling the Fanconi anemia DNA repair pathway. Only catalyzes ubiquitination of MCM7 when forks converge. Also involved in the repair of covalent DNA-protein cross-links (DPCs) during DNA synthesis: promotes ubiquitination of DPCs, leading to their degradation by the proteasome. Has also been proposed to play a role in promoting translesion synthesis by mediating the assembly of 'Lys-63'-linked poly-ubiquitin chains on the Y-family polymerase POLN in order to facilitate bypass of DNA lesions and preserve genomic integrity. The function in translesion synthesis is however controversial. Acts as a regulator of the spindle assembly checkpoint. Also acts as a negative regulator of innate immune signaling by inhibiting activation of NF-kappa-B mediated by TNF. Negatively regulates TLR3/4- and RIG-I-mediated IRF3 activation and subsequent IFNB1 production and cellular antiviral response by promoting 'Lys-48'-linked polyubiquitination of TNK1 leading to its proteasomal degradation. The chain is E3 ubiquitin-protein ligase TRAIP from Mus musculus (Mouse).